Here is a 358-residue protein sequence, read N- to C-terminus: UDP-N-acetylglucosamine--N-acetylmuramyl-(pentapeptide) pyrophosphoryl-undecaprenol N-acetylglucosamine transferase (358 aa).

UDP-N-acetyl-alpha-D-glucosamine contacts are provided by S196 and Q287.

Belongs to the glycosyltransferase 28 family. MurG subfamily.

It localises to the cell membrane. It carries out the reaction Mur2Ac(oyl-L-Ala-gamma-D-Glu-L-Lys-D-Ala-D-Ala)-di-trans,octa-cis-undecaprenyl diphosphate + UDP-N-acetyl-alpha-D-glucosamine = beta-D-GlcNAc-(1-&gt;4)-Mur2Ac(oyl-L-Ala-gamma-D-Glu-L-Lys-D-Ala-D-Ala)-di-trans,octa-cis-undecaprenyl diphosphate + UDP + H(+). The protein operates within cell wall biogenesis; peptidoglycan biosynthesis. Functionally, cell wall formation. Catalyzes the transfer of a GlcNAc subunit on undecaprenyl-pyrophosphoryl-MurNAc-pentapeptide (lipid intermediate I) to form undecaprenyl-pyrophosphoryl-MurNAc-(pentapeptide)GlcNAc (lipid intermediate II). The protein is UDP-N-acetylglucosamine--N-acetylmuramyl-(pentapeptide) pyrophosphoryl-undecaprenol N-acetylglucosamine transferase of Streptococcus uberis (strain ATCC BAA-854 / 0140J).